The following is a 726-amino-acid chain: Probable dipeptidyl-peptidase 5 (726 aa).

The first 19 residues, 1–19 (MAAAKWLIASLAFASSGLA), serve as a signal peptide directing secretion. Asn-96 and Asn-252 each carry an N-linked (GlcNAc...) asparagine glycan. The tract at residues 269–291 (AEPINKRNGPRTPQGIEGASSSP) is disordered. Ser-558 acts as the Charge relay system in catalysis. Asn-605 carries N-linked (GlcNAc...) asparagine glycosylation. Catalysis depends on charge relay system residues Asp-641 and His-673. Asn-699 is a glycosylation site (N-linked (GlcNAc...) asparagine).

The protein belongs to the peptidase S9C family.

The protein resides in the secreted. Functionally, extracellular dipeptidyl-peptidase which removes N-terminal dipeptides sequentially from polypeptides having unsubstituted N-termini. Contributes to pathogenicity. The polypeptide is Probable dipeptidyl-peptidase 5 (DPP5) (Trichophyton verrucosum (strain HKI 0517)).